Reading from the N-terminus, the 554-residue chain is Formate--tetrahydrofolate ligase (554 aa).

An ATP-binding site is contributed by 64-71 (TPYGEGKT).

The protein belongs to the formate--tetrahydrofolate ligase family.

It carries out the reaction (6S)-5,6,7,8-tetrahydrofolate + formate + ATP = (6R)-10-formyltetrahydrofolate + ADP + phosphate. It participates in one-carbon metabolism; tetrahydrofolate interconversion. In Caldicellulosiruptor saccharolyticus (strain ATCC 43494 / DSM 8903 / Tp8T 6331), this protein is Formate--tetrahydrofolate ligase.